A 262-amino-acid chain; its full sequence is Cytochrome c oxidase subunit 3 (262 aa).

6 consecutive transmembrane segments (helical) span residues 39–59 (YTMT…YQWW), 83–103 (GMIL…WAFF), 120–140 (VGIA…ILLA), 163–183 (GLFF…YEYI), 201–221 (ATGF…ICFL), and 240–260 (AWYW…IYWW).

Belongs to the cytochrome c oxidase subunit 3 family. As to quaternary structure, component of the cytochrome c oxidase (complex IV, CIV), a multisubunit enzyme composed of a catalytic core of 3 subunits and several supernumerary subunits. The complex exists as a monomer or a dimer and forms supercomplexes (SCs) in the inner mitochondrial membrane with ubiquinol-cytochrome c oxidoreductase (cytochrome b-c1 complex, complex III, CIII).

The protein resides in the mitochondrion inner membrane. It carries out the reaction 4 Fe(II)-[cytochrome c] + O2 + 8 H(+)(in) = 4 Fe(III)-[cytochrome c] + 2 H2O + 4 H(+)(out). In terms of biological role, component of the cytochrome c oxidase, the last enzyme in the mitochondrial electron transport chain which drives oxidative phosphorylation. The respiratory chain contains 3 multisubunit complexes succinate dehydrogenase (complex II, CII), ubiquinol-cytochrome c oxidoreductase (cytochrome b-c1 complex, complex III, CIII) and cytochrome c oxidase (complex IV, CIV), that cooperate to transfer electrons derived from NADH and succinate to molecular oxygen, creating an electrochemical gradient over the inner membrane that drives transmembrane transport and the ATP synthase. Cytochrome c oxidase is the component of the respiratory chain that catalyzes the reduction of oxygen to water. Electrons originating from reduced cytochrome c in the intermembrane space (IMS) are transferred via the dinuclear copper A center (CU(A)) of subunit 2 and heme A of subunit 1 to the active site in subunit 1, a binuclear center (BNC) formed by heme A3 and copper B (CU(B)). The BNC reduces molecular oxygen to 2 water molecules using 4 electrons from cytochrome c in the IMS and 4 protons from the mitochondrial matrix. In Anopheles gambiae (African malaria mosquito), this protein is Cytochrome c oxidase subunit 3 (COIII).